We begin with the raw amino-acid sequence, 227 residues long: 2,3-bisphosphoglycerate-dependent phosphoglycerate mutase (227 aa).

Substrate-binding positions include 8 to 15 (RHGQSIWN), 21 to 22 (TG), Arg-58, 110 to 113 (ERYY), Lys-121, 137 to 138 (RR), and 181 to 182 (GN). His-9 functions as the Tele-phosphohistidine intermediate in the catalytic mechanism. Glu-110 functions as the Proton donor/acceptor in the catalytic mechanism.

It belongs to the phosphoglycerate mutase family. BPG-dependent PGAM subfamily. Homodimer.

The catalysed reaction is (2R)-2-phosphoglycerate = (2R)-3-phosphoglycerate. It participates in carbohydrate degradation; glycolysis; pyruvate from D-glyceraldehyde 3-phosphate: step 3/5. Its function is as follows. Catalyzes the interconversion of 2-phosphoglycerate and 3-phosphoglycerate. The chain is 2,3-bisphosphoglycerate-dependent phosphoglycerate mutase from Pseudoalteromonas atlantica (strain T6c / ATCC BAA-1087).